Consider the following 948-residue polypeptide: MTMSDIEDSDVENYDIAGKLALRSDDELGSDDEQNTSGEEGEEVELQDEIVSSDDDDDDGDKGKDTGKMPPTKKAKLDRKPGSDFDFASLDFEAEDNEEEDKTLSSILALSNPTAKKAKAGSFASFGFSKFLLANIAKKGYKQPTPIQRRSIPLIIDNRDVVGMARTGSGKTAAFVLPLIEKLKLRSPSGVRAVILSPSRELALQTYKQVKEFSHGTNLQSIVLIGGDSLEEDFGKMMTKPDIIVCTPGRFLHLKVEMQYDLMSVQYIVFDEADRLFEMGFAEQLNELLLALPSNRQSLLFSATLPRSLVEFAKAGLTNPVLVRLDADSKLSENLQMAYFTTKRNEREANLLYILQEVIKMPLGTPEEVKKLAAMDKRSIESDEENEEAKEQNNGKKRKYKFKKERMPSAKELPSEKSTIIFVPTKHHVEYVTSLLKDAGYLVSYIYGTLDQHARKNQLYLFRIGLTKILVVTDVAARGIDIPVLANVINFTLPGSSKIFIHRVGRTARAGNKGWAYSIVNSSELPYLLDLEIFLGKKLLLTSMHEAKCELLKKKQGGSFIPPRINYTERLVVGAIPRLDLETFQELYENLLRNNYEIKVLKDVAAKGEKLYHRTRQPASQESLKRSKEILETNSWDDQHLLFGENLEKMKDDFLAKLQNRNVKETVFELKKKGVKENDSLAEFMHRRRRQLAPIQRKAQERKELLQKERLAGLSHGIEEEVLKIDGEASGYNQNVDEAELQETFELGDEAHNKKKTFKDPQFFMSHYAPASVIQDQQLSIASSFANDAQAATFDLDNDDKLQKNKQQVMKWDKKKGKYINSMSTDKKYIISENGTKIPATFRSGKFDEWRKQRNLKPTSSLTNNETPENNKRFKHKKQSVPKLPDKYRDDYHKQKQKVEKALDSGMRVKGYNKPGMQQELKSTEQIRKARAIKEQRRAKNARPSRRK.

Acidic residues-rich tracts occupy residues 1–13 (MTMS…DVEN) and 27–60 (ELGS…DDDG). The disordered stretch occupies residues 1-80 (MTMSDIEDSD…PTKKAKLDRK (80 aa)). The Q motif signature appears at 121–149 (GSFASFGFSKFLLANIAKKGYKQPTPIQR). The Helicase ATP-binding domain maps to 152 to 323 (IPLIIDNRDV…KAGLTNPVLV (172 aa)). ATP is bound at residue 165 to 172 (ARTGSGKT). Residues 271–274 (DEAD) carry the DEAD box motif. Disordered regions lie at residues 378–408 (RSIE…ERMP) and 849–948 (EWRK…SRRK). Over residues 395–404 (GKKRKYKFKK) the composition is skewed to basic residues. The 158-residue stretch at 395–552 (GKKRKYKFKK…SMHEAKCELL (158 aa)) folds into the Helicase C-terminal domain. Polar residues predominate over residues 856-868 (LKPTSSLTNNETP). 2 stretches are compositionally biased toward basic and acidic residues: residues 884-903 (LPDK…EKAL) and 922-938 (KSTE…EQRR). Positions 939-948 (AKNARPSRRK) are enriched in basic residues.

The protein belongs to the DEAD box helicase family. DDX54/DBP10 subfamily.

It is found in the nucleus. It localises to the nucleolus. It catalyses the reaction ATP + H2O = ADP + phosphate + H(+). Functionally, ATP-binding RNA helicase involved in the biogenesis of 60S ribosomal subunits and is required for the normal formation of 25S and 5.8S rRNAs. This Lodderomyces elongisporus (strain ATCC 11503 / CBS 2605 / JCM 1781 / NBRC 1676 / NRRL YB-4239) (Yeast) protein is ATP-dependent RNA helicase DBP10 (DBP10).